Reading from the N-terminus, the 408-residue chain is MSRDVKKVVLAYSGGLDTSVILKWLQTTYRCEVVTFTADLGQGEELEPARKKAELLGIKPENIFIEDVREEFVRDYVFPMFRANAVYEGQYLLGTSIARPLIAKKQIEIARKVGADAVSHGATGKGNDQVRFELGYYALEPEITVIAPWREWDLTSRTKLLEFAETHQIPIAKDKRGEAPFSVDANLLHSSSEGKVLEDPAEDAPEYVYQRTISPEAAPDVATVITIGFEKGDAVSINGEALSPATLLAKLNELGKANGIGRLDLVENRFVGMKSRGVYETPGGTILLAAHRGIESITLDRGAAHLKDELMPRYAELIYNGFWFSPEREMLQAAIDHSQAYVTGEVTVKLYKGNATVIGRKSPYSLYNQELVTFEEGAVAYDHRDAAGFIKLNALRLRTTAARARKAQ.

ATP contacts are provided by residues 11–19 and A38; that span reads AYSGGLDTS. L-citrulline contacts are provided by Y91 and S96. ATP is bound at residue G121. L-aspartate-binding residues include T123, N127, and D128. Residue N127 coordinates L-citrulline. Residues R131, S182, S191, E267, and Y279 each coordinate L-citrulline.

Belongs to the argininosuccinate synthase family. Type 1 subfamily. In terms of assembly, homotetramer.

Its subcellular location is the cytoplasm. The catalysed reaction is L-citrulline + L-aspartate + ATP = 2-(N(omega)-L-arginino)succinate + AMP + diphosphate + H(+). It participates in amino-acid biosynthesis; L-arginine biosynthesis; L-arginine from L-ornithine and carbamoyl phosphate: step 2/3. This Azorhizobium caulinodans (strain ATCC 43989 / DSM 5975 / JCM 20966 / LMG 6465 / NBRC 14845 / NCIMB 13405 / ORS 571) protein is Argininosuccinate synthase.